A 475-amino-acid chain; its full sequence is Ribulose bisphosphate carboxylase large chain (475 aa).

Residues N123 and T173 each contribute to the substrate site. The active-site Proton acceptor is K175. Residue K177 coordinates substrate. The Mg(2+) site is built by K201, D203, and E204. K201 carries the post-translational modification N6-carboxylysine. The active-site Proton acceptor is H294. The substrate site is built by R295, H327, and S379.

This sequence belongs to the RuBisCO large chain family. Type I subfamily. Heterohexadecamer of 8 large chains and 8 small chains; disulfide-linked. The disulfide link is formed within the large subunit homodimers. Requires Mg(2+) as cofactor. The disulfide bond which can form in the large chain dimeric partners within the hexadecamer appears to be associated with oxidative stress and protein turnover.

It is found in the plastid. It localises to the chloroplast. It carries out the reaction 2 (2R)-3-phosphoglycerate + 2 H(+) = D-ribulose 1,5-bisphosphate + CO2 + H2O. The enzyme catalyses D-ribulose 1,5-bisphosphate + O2 = 2-phosphoglycolate + (2R)-3-phosphoglycerate + 2 H(+). RuBisCO catalyzes two reactions: the carboxylation of D-ribulose 1,5-bisphosphate, the primary event in carbon dioxide fixation, as well as the oxidative fragmentation of the pentose substrate in the photorespiration process. Both reactions occur simultaneously and in competition at the same active site. The polypeptide is Ribulose bisphosphate carboxylase large chain (Euglena gracilis).